The following is a 177-amino-acid chain: Large ribosomal subunit protein uL10 (177 aa).

Belongs to the universal ribosomal protein uL10 family. As to quaternary structure, part of the ribosomal stalk of the 50S ribosomal subunit. The N-terminus interacts with L11 and the large rRNA to form the base of the stalk. The C-terminus forms an elongated spine to which L12 dimers bind in a sequential fashion forming a multimeric L10(L12)X complex.

Forms part of the ribosomal stalk, playing a central role in the interaction of the ribosome with GTP-bound translation factors. The chain is Large ribosomal subunit protein uL10 from Leptospira biflexa serovar Patoc (strain Patoc 1 / Ames).